The primary structure comprises 336 residues: Serpentine receptor class delta-51 (336 aa).

7 helical membrane-spanning segments follow: residues valine 14–methionine 34, tyrosine 48–cysteine 68, cysteine 93–leucine 113, alanine 133–threonine 153, alanine 188–phenylalanine 208, glycine 237–leucine 257, and isoleucine 275–tyrosine 295.

This sequence belongs to the nematode receptor-like protein srd family.

The protein localises to the membrane. This is Serpentine receptor class delta-51 (srd-51) from Caenorhabditis elegans.